A 205-amino-acid polypeptide reads, in one-letter code: Large ribosomal subunit protein uL18 (205 aa).

The protein belongs to the universal ribosomal protein uL18 family. In terms of assembly, part of the 50S ribosomal subunit. Contacts the 5S and 23S rRNAs.

In terms of biological role, this is one of the proteins that bind and probably mediate the attachment of the 5S RNA into the large ribosomal subunit, where it forms part of the central protuberance. This Pyrobaculum neutrophilum (strain DSM 2338 / JCM 9278 / NBRC 100436 / V24Sta) (Thermoproteus neutrophilus) protein is Large ribosomal subunit protein uL18.